Reading from the N-terminus, the 443-residue chain is Probable glycine dehydrogenase (decarboxylating) subunit 1 (443 aa).

Belongs to the GcvP family. N-terminal subunit subfamily. The glycine cleavage system is composed of four proteins: P, T, L and H. In this organism, the P 'protein' is a heterodimer of two subunits.

It catalyses the reaction N(6)-[(R)-lipoyl]-L-lysyl-[glycine-cleavage complex H protein] + glycine + H(+) = N(6)-[(R)-S(8)-aminomethyldihydrolipoyl]-L-lysyl-[glycine-cleavage complex H protein] + CO2. Its function is as follows. The glycine cleavage system catalyzes the degradation of glycine. The P protein binds the alpha-amino group of glycine through its pyridoxal phosphate cofactor; CO(2) is released and the remaining methylamine moiety is then transferred to the lipoamide cofactor of the H protein. This chain is Probable glycine dehydrogenase (decarboxylating) subunit 1, found in Nitratidesulfovibrio vulgaris (strain DSM 19637 / Miyazaki F) (Desulfovibrio vulgaris).